The chain runs to 152 residues: Flagellar assembly factor FliW (152 aa).

It belongs to the FliW family. As to quaternary structure, interacts with translational regulator CsrA and flagellin(s).

The protein localises to the cytoplasm. Its function is as follows. Acts as an anti-CsrA protein, binds CsrA and prevents it from repressing translation of its target genes, one of which is flagellin. Binds to flagellin and participates in the assembly of the flagellum. This is Flagellar assembly factor FliW from Desulfitobacterium hafniense (strain DSM 10664 / DCB-2).